The primary structure comprises 1462 residues: Copper-transporting ATPase 2 (1462 aa).

Residues Met-1 to Lys-23 form a disordered region. Residues Met-1 to Ser-655 are Cytoplasmic-facing. HMA domains follow at residues Ala-68–Ser-134, Ala-153–Ala-219, Ala-267–Phe-333, and Arg-361–Ser-427. Cu(+)-binding residues include Cys-79, Cys-82, Cys-164, Cys-167, Cys-278, and Cys-281. Residues Phe-333 to Arg-361 form a disordered region. Cys-372 contacts Cu(+). Residues Lys-460–Thr-487 form a disordered region. Positions Gly-475 to Thr-487 are enriched in polar residues. A phosphoserine mark is found at Ser-478 and Ser-483. 2 HMA domains span residues Gln-490–Ser-556 and Gly-566–Ser-632. Cu(+)-binding residues include Cys-501, Cys-504, Cys-577, and Cys-580. Residues Phe-656 to Ser-677 traverse the membrane as a helical segment. Residues Ser-678–Leu-699 lie on the Extracellular side of the membrane. A helical membrane pass occupies residues Ile-700–Gln-719. The Cytoplasmic segment spans residues Ala-720–His-726. Residues Arg-727–Leu-747 traverse the membrane as a helical segment. The Extracellular segment spans residues Val-748–Phe-766. Residues Asp-767 to Lys-787 form a helical membrane-spanning segment. Residues Ser-788–Arg-921 lie on the Cytoplasmic side of the membrane. The helical transmembrane segment at Phe-922–Ile-944 threads the bilayer. Topologically, residues Gly-945–Phe-974 are extracellular. The helical transmembrane segment at Gln-975–Ala-996 threads the bilayer. Residues Val-997 to Arg-1319 lie on the Cytoplasmic side of the membrane. The 4-aspartylphosphate intermediate role is filled by Asp-1029. 2 residues coordinate Mg(2+): Asp-1264 and Asp-1268. The chain crosses the membrane as a helical span at residues Val-1320 to Ala-1337. Over Gly-1338–Gln-1348 the chain is Extracellular. A helical transmembrane segment spans residues Pro-1349–Leu-1368. Over Gln-1369–Ile-1462 the chain is Cytoplasmic. Phosphoserine is present on residues Ser-1395 and Ser-1454.

This sequence belongs to the cation transport ATPase (P-type) (TC 3.A.3) family. Type IB subfamily. Monomer. Interacts with COMMD1/MURR1. Interacts with DCTN4, in a copper-dependent manner. Interacts with ATOX1. Interacts (via C-terminus) with ZBTB16/PLZF. As to expression, detected in liver and kidney.

It is found in the golgi apparatus. Its subcellular location is the trans-Golgi network membrane. The protein resides in the late endosome. The catalysed reaction is Cu(+)(in) + ATP + H2O = Cu(+)(out) + ADP + phosphate + H(+). Copper ion transmembrane transporter involved in the export of copper out of the cells, such as the efflux of hepatic copper into the bile. The polypeptide is Copper-transporting ATPase 2 (Atp7b) (Mus musculus (Mouse)).